Reading from the N-terminus, the 295-residue chain is Tyrosine recombinase XerC (295 aa).

The Core-binding (CB) domain occupies 1–84 (MTLEEQFLSY…SLKSFYRLLT (84 aa)). Positions 105–289 (KLPEFFYQDE…SMQHLTAEYR (185 aa)) constitute a Tyr recombinase domain. Residues R145, K169, H241, R244, and H267 contribute to the active site. Residue Y276 is the O-(3'-phospho-DNA)-tyrosine intermediate of the active site.

The protein belongs to the 'phage' integrase family. XerC subfamily. Forms a cyclic heterotetrameric complex composed of two molecules of XerC and two molecules of XerD.

It is found in the cytoplasm. In terms of biological role, site-specific tyrosine recombinase, which acts by catalyzing the cutting and rejoining of the recombining DNA molecules. The XerC-XerD complex is essential to convert dimers of the bacterial chromosome into monomers to permit their segregation at cell division. It also contributes to the segregational stability of plasmids. In Lactobacillus leichmannii, this protein is Tyrosine recombinase XerC.